A 92-amino-acid polypeptide reads, in one-letter code: UPF0223 protein SSP1692 (92 aa).

This sequence belongs to the UPF0223 family.

In Staphylococcus saprophyticus subsp. saprophyticus (strain ATCC 15305 / DSM 20229 / NCIMB 8711 / NCTC 7292 / S-41), this protein is UPF0223 protein SSP1692.